The chain runs to 75 residues: uncharacterized protein (75 aa).

An N-terminal signal peptide occupies residues 1 to 26 (MQFLERHFSVLFPVLFFFSFYPISFA).

Its subcellular location is the secreted. This is an uncharacterized protein from Schizosaccharomyces pombe (strain 972 / ATCC 24843) (Fission yeast).